A 251-amino-acid chain; its full sequence is L,D-transpeptidase 1 (251 aa).

The signal sequence occupies residues 1–28; it reads MRRVVRYLSVVVAITLMLTAESVSIATA. The region spanning 125 to 250 is the L,D-TPase catalytic domain; that stretch reads LIGVASISAH…VTVGDPIEVV (126 aa). Substrate contacts are provided by residues Tyr-190 and 203–204; that span reads SG. The active-site Proton donor/acceptor is the His-208. Cys-226 (nucleophile) is an active-site residue. A substrate-binding site is contributed by Asn-228.

Monomer.

The protein localises to the periplasm. The protein operates within cell wall biogenesis; peptidoglycan biosynthesis. Is irreversibly inactivated by the beta-lactams carbapenems via the formation of a covalent adduct resulting from acylation of the catalytic Cys. Generates 3-&gt;3 cross-links in peptidoglycan, catalyzing the cleavage of the mDap(3)-D-Ala(4) bond of a tetrapeptide donor stem and the formation of a bond between the carbonyl of mDap(3) of the donor stem and the side chain of mDap(3) of the acceptor stem. Is specific for donor substrates containing a stem tetrapeptide since it cannot use pentapeptide stems. The sequence is that of L,D-transpeptidase 1 (ldtA) from Mycobacterium tuberculosis (strain CDC 1551 / Oshkosh).